A 455-amino-acid chain; its full sequence is MREVISVHVGQAGVQIGNACWELYCLEHGIGPDGFPTENSEVHKNNSYLNDGFGTFFSETGQGKFVPRSIYVDLEPNVIDQVRTGPYKDLFHPEQMVTGKEDASNNYARGHYTVGKEMIDSVLERIRRMADNCSGLQGFLVFHSFGGGTGSGLGALLLERLNMEYGKKSNLQFSVYPAPQVSTSVVEPYNSVLTTHATLDNSDCTFMVDNEACYDICRRNLDIERPTYENLNRLIAQVVSSITASLRFAGSLNVDLNEFQTNLVPYPRIHFPLVTYSPIVSAAKAFHESNSVQEITNQCFEPYNQMVKCDPRTGRYMATCLLYRGDVIPRDVQAAVTSIKSRRTIQFVDWCPTGFKIGICYEPPQHVPGSGIAKVNRAVCMLSNTTSIAEAWSRLDHKFDLMYSKRAFVHWYVGEGMEEGEFSEAREDLAALERDYEEVGQDSMDNEMYEADEEY.

8 residues coordinate GTP: glutamine 11, glutamate 75, serine 144, glycine 148, threonine 149, threonine 183, asparagine 210, and asparagine 232. Position 75 (glutamate 75) interacts with Mg(2+). Residue glutamate 258 is part of the active site.

Belongs to the tubulin family. In terms of assembly, dimer of alpha and beta chains. A typical microtubule is a hollow water-filled tube with an outer diameter of 25 nm and an inner diameter of 15 nM. Alpha-beta heterodimers associate head-to-tail to form protofilaments running lengthwise along the microtubule wall with the beta-tubulin subunit facing the microtubule plus end conferring a structural polarity. Microtubules usually have 13 protofilaments but different protofilament numbers can be found in some organisms and specialized cells. The cofactor is Mg(2+).

It localises to the cytoplasm. The protein resides in the cytoskeleton. It catalyses the reaction GTP + H2O = GDP + phosphate + H(+). Functionally, tubulin is the major constituent of microtubules, a cylinder consisting of laterally associated linear protofilaments composed of alpha- and beta-tubulin heterodimers. Microtubules grow by the addition of GTP-tubulin dimers to the microtubule end, where a stabilizing cap forms. Below the cap, tubulin dimers are in GDP-bound state, owing to GTPase activity of alpha-tubulin. This Schizosaccharomyces pombe (strain 972 / ATCC 24843) (Fission yeast) protein is Tubulin alpha-1 chain (nda2).